The primary structure comprises 304 residues: MAATNGASNDFTVKAGLAQMLKGGVIMDVVNAEQARIAEEAGAAAVMALERVPADIRAQGGVARMSDPSMIKEIMEAVTIPVMAKARIGHFVECQILEAIGVDYIDESEVLTPADNLYHVTKHNFKAPFVCGCRNLGEALRRISEGAAMIRTKGEAGTGDVVEAVKHMRTVNAEIARARAILQSSPDPEPELRAYARELEAPYELLREAAEKGRLPVVNFAAGGVATPADAALMMQLGCDGVFVGSGIFKSGDAKKRAKAIVQAVTHYKDPKVLAEVSQGLGEAMVGINVSHMKDEDKLAKRGW.

Residue Asp-28 coordinates D-ribose 5-phosphate. Lys-85 (schiff-base intermediate with D-ribose 5-phosphate) is an active-site residue. Gly-157 lines the D-ribose 5-phosphate pocket. A D-glyceraldehyde 3-phosphate-binding site is contributed by Arg-169. Residues Gly-224 and 245 to 246 each bind D-ribose 5-phosphate; that span reads GS.

This sequence belongs to the PdxS/SNZ family.

It carries out the reaction aldehydo-D-ribose 5-phosphate + D-glyceraldehyde 3-phosphate + L-glutamine = pyridoxal 5'-phosphate + L-glutamate + phosphate + 3 H2O + H(+). Its pathway is cofactor biosynthesis; pyridoxal 5'-phosphate biosynthesis. Functionally, catalyzes the formation of pyridoxal 5'-phosphate from ribose 5-phosphate (RBP), glyceraldehyde 3-phosphate (G3P) and ammonia. The ammonia is provided by PDX2. Can also use ribulose 5-phosphate and dihydroxyacetone phosphate as substrates, resulting from enzyme-catalyzed isomerization of RBP and G3P, respectively. Also plays an indirect role in resistance to singlet oxygen-generating photosensitizers. This is Pyridoxal 5'-phosphate synthase subunit pyroA (pyroA) from Emericella nidulans (strain FGSC A4 / ATCC 38163 / CBS 112.46 / NRRL 194 / M139) (Aspergillus nidulans).